The sequence spans 231 residues: MTQDELKQLVGQAAADYVIANVPEGTIIGVGTGSTANCFIDALAAHKARFRGAVSSSVATTARLQSHGIPVFDLNDIESLPVYVDGADEIDHGGAMIKGGGGALTREKIVASVAEKFLCIADASKVVDVLGQFPLPVEVVPMARTAIGRRVTALGGVPIVRVTKDGAPFLTDNGNEIIDVKGLRITDPRTLEAHVNAWPGVVTVGLFAARGADLCLLGTQKGVETIVYPNR.

Substrate is bound by residues 32–35 (TGST), 85–88 (DGAD), and 98–101 (KGGG). Residue Glu107 is the Proton acceptor of the active site. Substrate is bound at residue Lys125.

This sequence belongs to the ribose 5-phosphate isomerase family. In terms of assembly, homodimer.

It catalyses the reaction aldehydo-D-ribose 5-phosphate = D-ribulose 5-phosphate. Its pathway is carbohydrate degradation; pentose phosphate pathway; D-ribose 5-phosphate from D-ribulose 5-phosphate (non-oxidative stage): step 1/1. In terms of biological role, catalyzes the reversible conversion of ribose-5-phosphate to ribulose 5-phosphate. The polypeptide is Ribose-5-phosphate isomerase A (Paraburkholderia phymatum (strain DSM 17167 / CIP 108236 / LMG 21445 / STM815) (Burkholderia phymatum)).